The sequence spans 222 residues: uncharacterized protein (222 aa).

Residues 7 to 26 (ICLVSLICISGIYFGYQYYQ) form a helical membrane-spanning segment. Residues 139-222 (CRSNAGYKVQ…AYNKQSCVLK (84 aa)) form the SPOR domain.

The protein localises to the membrane. This is an uncharacterized protein from Rickettsia prowazekii (strain Madrid E).